Here is a 66-residue protein sequence, read N- to C-terminus: Large ribosomal subunit protein bL31 (66 aa).

Zn(2+) is bound by residues Cys-16, Cys-18, Cys-36, and Cys-39.

This sequence belongs to the bacterial ribosomal protein bL31 family. Type A subfamily. Part of the 50S ribosomal subunit. Requires Zn(2+) as cofactor.

In terms of biological role, binds the 23S rRNA. This is Large ribosomal subunit protein bL31 from Trichlorobacter lovleyi (strain ATCC BAA-1151 / DSM 17278 / SZ) (Geobacter lovleyi).